Here is a 313-residue protein sequence, read N- to C-terminus: RHOMBOID-like protein 7 (313 aa).

Over residues 1 to 11 (MLSTAAEEDPE) the composition is skewed to acidic residues. A disordered region spans residues 1–24 (MLSTAAEEDPEGGSRETNNGGETT). Positions 15–24 (RETNNGGETT) are enriched in polar residues. Transmembrane regions (helical) follow at residues 31–51 (SWIIPIVVIANVVVFVVVMYY), 112–132 (WLHAGVIHLLANMCCVAYIGV), 143–163 (VGTIYLVSGFCGSILSCLFLE), 166–186 (ISVGASSALFGLLGAMLSELL), 196–216 (GVAIVMLLVIVGVNLGLGTLP), 221–241 (FAHIGGFFGGFLLGFLLLIHP), and 269–289 (LCIVASIVFVAGFTSGLVILF). Catalysis depends on Ser-171, which acts as the Nucleophile. Residue His-223 is the Charge relay system of the active site.

It belongs to the peptidase S54 family.

The protein localises to the membrane. It catalyses the reaction Cleaves type-1 transmembrane domains using a catalytic dyad composed of serine and histidine that are contributed by different transmembrane domains.. In terms of biological role, probable rhomboid-type serine protease that catalyzes intramembrane proteolysis. May function in embryo development. This Arabidopsis thaliana (Mouse-ear cress) protein is RHOMBOID-like protein 7.